The primary structure comprises 1197 residues: Serine/threonine-protein kinase pakA (1197 aa).

Disordered stretches follow at residues Met1–Arg96, Gln328–Asp383, Arg430–Asn468, Glu485–Gly543, and Asn562–Thr819. Over residues Gln19–Lys30 the composition is skewed to basic and acidic residues. The segment covering Ala34 to Ile49 has biased composition (polar residues). Basic and acidic residues predominate over residues Asn51–Asn69. A compositionally biased stretch (polar residues) spans Lys70–Asn79. 2 stretches are compositionally biased toward low complexity: residues Pro80–Ile94 and Asn346–Asn381. The span at Arg439–Glu458 shows a compositional bias: basic and acidic residues. The span at Ser494–Thr523 shows a compositional bias: low complexity. Residues Gly524–Thr536 are compositionally biased toward polar residues. A Phosphothreonine; by PKB modification is found at Thr585. Positions Ser593–His615 are enriched in polar residues. 2 stretches are compositionally biased toward low complexity: residues Asn636–His653 and Ser671–Thr707. Residues Thr718–Gly727 show a composition bias toward polar residues. Positions Ser728–Lys737 are enriched in basic and acidic residues. A compositionally biased stretch (low complexity) spans Ser739–Ser756. The segment covering Gly757 to Ser790 has biased composition (basic and acidic residues). In terms of domain architecture, CRIB spans Val817–Asn830. A Protein kinase domain is found at Tyr911–Leu1164. Residues Ile917–Val925 and Lys940 each bind ATP. Catalysis depends on Asp1032, which acts as the Proton acceptor.

Belongs to the protein kinase superfamily. STE Ser/Thr protein kinase family. STE20 subfamily. Mg(2+) is required as a cofactor. Post-translationally, phosphorylation on Thr-585 results in cAMP-mediated activation and localization to the cytoskeleton. As to expression, colocalizes with myosin II to the cleavage furrow of cells undergoing cytokinesis and the posterior cortex of polarized cells.

Its subcellular location is the cytoplasm. The protein localises to the cytosol. It localises to the cytoskeleton. The enzyme catalyses L-seryl-[protein] + ATP = O-phospho-L-seryl-[protein] + ADP + H(+). It catalyses the reaction L-threonyl-[protein] + ATP = O-phospho-L-threonyl-[protein] + ADP + H(+). Regulator of the myosin II component of the cytoskeleton: required for regulation of cytokinesis. Functions during chemotaxis, required for maintaining the direction of cell movement, suppressing lateral pseudopod extension, and proper retraction of the posterior of chemotaxing cells. The sequence is that of Serine/threonine-protein kinase pakA (pakA) from Dictyostelium discoideum (Social amoeba).